The chain runs to 216 residues: Inorganic pyrophosphatase (216 aa).

Residues Lys-39, Arg-53, and Tyr-65 each contribute to the substrate site. Residues Asp-93, Asp-98, and Asp-131 each contribute to the Mg(2+) site. Tyr-168 provides a ligand contact to substrate.

It belongs to the PPase family. As to quaternary structure, homohexamer. The cofactor is Mg(2+).

It localises to the cytoplasm. It carries out the reaction diphosphate + H2O = 2 phosphate + H(+). Catalyzes the hydrolysis of inorganic pyrophosphate (PPi) forming two phosphate ions. This chain is Inorganic pyrophosphatase, found in Chlamydia caviae (strain ATCC VR-813 / DSM 19441 / 03DC25 / GPIC) (Chlamydophila caviae).